Here is a 472-residue protein sequence, read N- to C-terminus: 3-isopropylmalate dehydratase large subunit (472 aa).

Residues C353, C414, and C417 each coordinate [4Fe-4S] cluster.

This sequence belongs to the aconitase/IPM isomerase family. LeuC type 1 subfamily. Heterodimer of LeuC and LeuD. Requires [4Fe-4S] cluster as cofactor.

It carries out the reaction (2R,3S)-3-isopropylmalate = (2S)-2-isopropylmalate. It participates in amino-acid biosynthesis; L-leucine biosynthesis; L-leucine from 3-methyl-2-oxobutanoate: step 2/4. In terms of biological role, catalyzes the isomerization between 2-isopropylmalate and 3-isopropylmalate, via the formation of 2-isopropylmaleate. This Acinetobacter baumannii (strain AB307-0294) protein is 3-isopropylmalate dehydratase large subunit.